We begin with the raw amino-acid sequence, 42 residues long: Potassium channel toxin gamma-KTx 1.10 (42 aa).

Intrachain disulfides connect Cys5/Cys23, Cys11/Cys34, Cys20/Cys39, and Cys24/Cys41.

In terms of tissue distribution, expressed by the venom gland.

It localises to the secreted. In terms of biological role, blocks human Kv11.1/KCNH2/ERG1 potassium channels (reversible, IC(50)=3.4 nM). At high toxin concentrations, block of Kv11.1/KCNH2/ERG1 macroscopic current is almost complete. Does not accelerate the kinetics of the closing process and has no effect on the activation and inactivation kinetics of the Kv11.1/KCNH2/ERG1 channels. In Centruroides margaritatus (Central American bark Scorpion), this protein is Potassium channel toxin gamma-KTx 1.10.